A 231-amino-acid polypeptide reads, in one-letter code: Large ribosomal subunit protein uL1 (231 aa).

Belongs to the universal ribosomal protein uL1 family. As to quaternary structure, part of the 50S ribosomal subunit.

Binds directly to 23S rRNA. The L1 stalk is quite mobile in the ribosome, and is involved in E site tRNA release. Its function is as follows. Protein L1 is also a translational repressor protein, it controls the translation of the L11 operon by binding to its mRNA. This is Large ribosomal subunit protein uL1 from Macrococcus caseolyticus (strain JCSC5402) (Macrococcoides caseolyticum).